Reading from the N-terminus, the 321-residue chain is MSKPIVMERGVKYRDADKMALIPVKNVATEREALLRKPEWMKIKLPADSTRIQGIKAAMRKNGLHSVCEEASCPNLAECFNHGTATFMILGAICTRRCPFCDVAHGRPVAPDANEPQKLAQTIADMALRYVVITSVDRDDLRDGGAQHFADCITAIREKSPSIKIETLVPDFRGRMDRALEILTATPPDVFNHNLENVPRLYRQVRPGADYNWSLKLLERFKEAHPEIPTKSGLMVGLGETNAEIIEVMRDLRAHGVTMLTLGQYLQPSRHHLPVQRYVSPDEFEEMKAEAMAMGFTHAACGPFVRSSYHADLQAKGEEVK.

Cys-68, Cys-73, Cys-79, Cys-94, Cys-98, Cys-101, and Ser-308 together coordinate [4Fe-4S] cluster. One can recognise a Radical SAM core domain in the interval 80-297; it reads FNHGTATFMI…KAEAMAMGFT (218 aa).

This sequence belongs to the radical SAM superfamily. Lipoyl synthase family. It depends on [4Fe-4S] cluster as a cofactor.

It localises to the cytoplasm. The enzyme catalyses [[Fe-S] cluster scaffold protein carrying a second [4Fe-4S](2+) cluster] + N(6)-octanoyl-L-lysyl-[protein] + 2 oxidized [2Fe-2S]-[ferredoxin] + 2 S-adenosyl-L-methionine + 4 H(+) = [[Fe-S] cluster scaffold protein] + N(6)-[(R)-dihydrolipoyl]-L-lysyl-[protein] + 4 Fe(3+) + 2 hydrogen sulfide + 2 5'-deoxyadenosine + 2 L-methionine + 2 reduced [2Fe-2S]-[ferredoxin]. It participates in protein modification; protein lipoylation via endogenous pathway; protein N(6)-(lipoyl)lysine from octanoyl-[acyl-carrier-protein]: step 2/2. Its function is as follows. Catalyzes the radical-mediated insertion of two sulfur atoms into the C-6 and C-8 positions of the octanoyl moiety bound to the lipoyl domains of lipoate-dependent enzymes, thereby converting the octanoylated domains into lipoylated derivatives. The sequence is that of Lipoyl synthase from Cronobacter sakazakii (strain ATCC BAA-894) (Enterobacter sakazakii).